A 170-amino-acid polypeptide reads, in one-letter code: Group 2 truncated hemoglobin 3-1 (170 aa).

Residue His-98 coordinates heme b.

This sequence belongs to the truncated hemoglobin family. Group II subfamily. As to quaternary structure, homodimer when ferric.

In terms of biological role, hemoglobin-like protein that exhibits an unusual concentration-independent binding of O(2) and CO. Required for general plant development and during nodulation. May promote shoot organogenesis from root explants. The sequence is that of Group 2 truncated hemoglobin 3-1 from Medicago truncatula (Barrel medic).